We begin with the raw amino-acid sequence, 83 residues long: MNTQRKSKHLKTNPTIVASSSEEVSSLEWEEIAMAQEEEDLICRMYKLVGERWDLIAGRIPGRTAEEIERFWVMKNHRRSQLR.

One can recognise a Myb-like domain in the interval 35 to 72 (AQEEEDLICRMYKLVGERWDLIAGRIPGRTAEEIERFW).

In terms of tissue distribution, expressed in developing trichomes and non-root hair cells.

The protein localises to the nucleus. MYB-type transcription factor involved in epidermal cell fate specification. Acts as a negative regulator of trichome development, by mediating lateral inhibition. Promotes the formation of hair developing cells in H position in root epidermis, probably by inhibiting non-hair cell formation. The protein is MYB-like transcription factor ETC1 (ETC1) of Arabidopsis thaliana (Mouse-ear cress).